The primary structure comprises 356 residues: Probable neutral protease 2 homolog TRV_06370 (356 aa).

An N-terminal signal peptide occupies residues 1–17 (MQFTALLAALGAPLALA). A propeptide spanning residues 18-183 (ASIPAAAHNH…DDSTGVIDKR (166 aa)) is cleaved from the precursor. 2 disulfide bridges follow: cysteine 191–cysteine 262 and cysteine 269–cysteine 287. Residue histidine 311 coordinates Zn(2+). The active site involves glutamate 312. Zn(2+) contacts are provided by histidine 315 and aspartate 326.

This sequence belongs to the peptidase M35 family. The cofactor is Zn(2+).

It localises to the secreted. The enzyme catalyses Preferential cleavage of bonds with hydrophobic residues in P1'. Also 3-Asn-|-Gln-4 and 8-Gly-|-Ser-9 bonds in insulin B chain.. In terms of biological role, probable secreted metalloprotease that shows high activities on basic nuclear substrates such as histone and protamine. May be involved in virulence. The protein is Probable neutral protease 2 homolog TRV_06370 of Trichophyton verrucosum (strain HKI 0517).